A 257-amino-acid chain; its full sequence is NAD-capped RNA hydrolase NudC (257 aa).

Substrate is bound by residues K25 and R69. Zn(2+) contacts are provided by C98 and C101. E111 provides a ligand contact to substrate. Zn(2+)-binding residues include C116 and C119. Y124 is a substrate binding site. A Nudix hydrolase domain is found at 125–248 (PQIAPCIIVA…TVARRLIEDT (124 aa)). Positions 158, 174, and 178 each coordinate a divalent metal cation. The Nudix box signature appears at 159-180 (GFVEVGETLEQAVAREVMEESG). Substrate is bound at residue 192 to 199 (QPWPFPQS). Position 219 (E219) interacts with a divalent metal cation. A241 is a binding site for substrate.

Belongs to the Nudix hydrolase family. NudC subfamily. Homodimer. Mg(2+) serves as cofactor. The cofactor is Mn(2+). Zn(2+) is required as a cofactor.

It carries out the reaction a 5'-end NAD(+)-phospho-ribonucleoside in mRNA + H2O = a 5'-end phospho-adenosine-phospho-ribonucleoside in mRNA + beta-nicotinamide D-ribonucleotide + 2 H(+). The enzyme catalyses NAD(+) + H2O = beta-nicotinamide D-ribonucleotide + AMP + 2 H(+). The catalysed reaction is NADH + H2O = reduced beta-nicotinamide D-ribonucleotide + AMP + 2 H(+). Functionally, mRNA decapping enzyme that specifically removes the nicotinamide adenine dinucleotide (NAD) cap from a subset of mRNAs by hydrolyzing the diphosphate linkage to produce nicotinamide mononucleotide (NMN) and 5' monophosphate mRNA. The NAD-cap is present at the 5'-end of some mRNAs and stabilizes RNA against 5'-processing. Has preference for mRNAs with a 5'-end purine. Catalyzes the hydrolysis of a broad range of dinucleotide pyrophosphates. The chain is NAD-capped RNA hydrolase NudC from Shigella boydii serotype 18 (strain CDC 3083-94 / BS512).